The following is a 257-amino-acid chain: Transcriptional regulatory protein TrcR (257 aa).

Residues 33-147 enclose the Response regulatory domain; it reads RVLLVDDEPA…ELVARLRGLL (115 aa). Position 82 is a 4-aspartylphosphate (D82). A DNA-binding region (ompR/PhoB-type) is located at residues 158 to 255; the sequence is DEALRVGDLT…VRGIGYMLRP (98 aa).

Post-translationally, phosphorylated by TrcS.

Functionally, member of the two-component regulatory system TrcS/TrcR. Activates its own expression by binding specifically to the AT-rich sequence of the trcR promoter region. Also negatively regulates the expression of Rv1057 by binding to an AT-rich sequences within the Rv1057 upstream sequence. The TrcR-TrcS regulatory system may act as a transition regulatory system involved in adapting to an intracellular environment and transitioning from latency to reactivation. The polypeptide is Transcriptional regulatory protein TrcR (Mycobacterium tuberculosis (strain ATCC 25618 / H37Rv)).